Consider the following 211-residue polypeptide: Glycerol-3-phosphate acyltransferase 2 (211 aa).

Transmembrane regions (helical) follow at residues 6–26, 57–77, 82–102, 124–144, and 148–168; these read FASL…VVVG, IIVF…PVIF, HYLC…PIFL, FFLI…MVSL, and ISVV…LSII.

This sequence belongs to the PlsY family. In terms of assembly, probably interacts with PlsX.

It is found in the cell membrane. The catalysed reaction is an acyl phosphate + sn-glycerol 3-phosphate = a 1-acyl-sn-glycero-3-phosphate + phosphate. Its pathway is lipid metabolism; phospholipid metabolism. In terms of biological role, catalyzes the transfer of an acyl group from acyl-phosphate (acyl-PO(4)) to glycerol-3-phosphate (G3P) to form lysophosphatidic acid (LPA). This enzyme utilizes acyl-phosphate as fatty acyl donor, but not acyl-CoA or acyl-ACP. The chain is Glycerol-3-phosphate acyltransferase 2 from Lactobacillus acidophilus (strain ATCC 700396 / NCK56 / N2 / NCFM).